The primary structure comprises 267 residues: MGKLMAPKILVTNDDGVYSTGLKAAFDSVSDLGEVTISAPAVQQSGVGRSISIFEPLRITKTDVGGIPAYAVGGTPTDSVILGIFTILKQMPDLVLSGFNIGENISTDTITTSGTIGGALEAASYGIPAIAASMQVLDEGQKFDDPRDYHRERFEAGIKIVNKIARNVLRHGMPENVDLLNINIPYHAEEDTPIEITRLARKVFKTDVEERRDPRGRSYYWIAGDLIREEEEGTDVHAVMQKGYVSITPISLDSTARIEFSEIEKYL.

Residues aspartate 14, aspartate 15, serine 45, and asparagine 100 each contribute to the a divalent metal cation site.

Belongs to the SurE nucleotidase family. The cofactor is a divalent metal cation.

It localises to the cytoplasm. It catalyses the reaction a ribonucleoside 5'-phosphate + H2O = a ribonucleoside + phosphate. Nucleotidase that shows phosphatase activity on nucleoside 5'-monophosphates. This Methanosarcina acetivorans (strain ATCC 35395 / DSM 2834 / JCM 12185 / C2A) protein is 5'-nucleotidase SurE.